A 356-amino-acid polypeptide reads, in one-letter code: MDANVLIMAGGTGGHVFPALACAREFQARGYKVHWLGTPRGIENELIPQAGLPLHLINVTGLRGKGRLSLLKAPFMLLKALMQARKVVRQVKPVCVVGFGGYVTGPGGLAARLAGVPLIIHEQNAVAGTANRSLASFASRVCEAFPNTFAASAKRRTTGNPVRVELFLETPRQALAGRKARLLVLGGSLGAEPLNKLLPDALAQLPQDIQPEVFHQSGKNHDAVTAERYRNVGVEAQVAPFIQNMAQAYSWADLVVCRAGALTISELAAAGLPSLLIPLPHAIDDHQSRNADYLAREGAAFVMPQATTGAAEMAARLKEVLMQPEQLNSMARTARSLAKPDATNTVVNVCVEVAHG.

Residues 12–14 (TGG), Asn124, Arg163, Ser188, Ile242, and Gln287 each bind UDP-N-acetyl-alpha-D-glucosamine.

This sequence belongs to the glycosyltransferase 28 family. MurG subfamily.

Its subcellular location is the cell inner membrane. It carries out the reaction di-trans,octa-cis-undecaprenyl diphospho-N-acetyl-alpha-D-muramoyl-L-alanyl-D-glutamyl-meso-2,6-diaminopimeloyl-D-alanyl-D-alanine + UDP-N-acetyl-alpha-D-glucosamine = di-trans,octa-cis-undecaprenyl diphospho-[N-acetyl-alpha-D-glucosaminyl-(1-&gt;4)]-N-acetyl-alpha-D-muramoyl-L-alanyl-D-glutamyl-meso-2,6-diaminopimeloyl-D-alanyl-D-alanine + UDP + H(+). Its pathway is cell wall biogenesis; peptidoglycan biosynthesis. Cell wall formation. Catalyzes the transfer of a GlcNAc subunit on undecaprenyl-pyrophosphoryl-MurNAc-pentapeptide (lipid intermediate I) to form undecaprenyl-pyrophosphoryl-MurNAc-(pentapeptide)GlcNAc (lipid intermediate II). In Pseudomonas syringae pv. tomato (strain ATCC BAA-871 / DC3000), this protein is UDP-N-acetylglucosamine--N-acetylmuramyl-(pentapeptide) pyrophosphoryl-undecaprenol N-acetylglucosamine transferase.